The chain runs to 288 residues: Ankyrin repeat and SOCS box protein 8 (288 aa).

The residue at position 17 (Ser-17) is a Phosphoserine. ANK repeat units follow at residues 52 to 81, 85 to 113, 117 to 146, and 150 to 179; these read GTLK…EVNA, YNRT…NPNA, NRDT…SVNA, and NNDT…EVRV. One can recognise an SOCS box domain in the interval 235–288; it reads QLCEKLTVLCSAPGTLKTLSRYAVRRSLGLQYLPDAVKGLPLPASLKEYLLLIE.

This sequence belongs to the ankyrin SOCS box (ASB) family. In terms of assembly, interacts with TBK1; this interaction promotes TBK1 proteasomal degradation. Post-translationally, phosphorylated by TBK1.

The protein localises to the cytoplasm. Its pathway is protein modification; protein ubiquitination. Its function is as follows. May be a substrate-recognition component of a SCF-like ECS (Elongin-Cullin-SOCS-box protein) E3 ubiquitin-protein ligase complex which mediates the ubiquitination and subsequent proteasomal degradation of target proteins. Inhibits IFN-beta production through the IRF3 signaling pathway by targeting TBK1 via 'Lys-48'-linked ubiquitination, leading to its proteasomal degradation. The chain is Ankyrin repeat and SOCS box protein 8 (ASB8) from Bos taurus (Bovine).